We begin with the raw amino-acid sequence, 467 residues long: Serine/threonine-protein phosphatase 2A 56 kDa regulatory subunit epsilon isoform (467 aa).

The segment at M1–Q39 is disordered. Position 2 is an N-acetylserine (S2). T7 carries the phosphothreonine modification. Over residues K20–R29 the composition is skewed to basic residues. Residues S30, S32, and S34 each carry the phosphoserine modification. Low complexity predominate over residues S30 to Q39.

Belongs to the phosphatase 2A regulatory subunit B56 family. In terms of assembly, PP2A consists of a common heterodimeric core enzyme, composed of a 36 kDa catalytic subunit (subunit C) and a 65 kDa constant regulatory subunit (PR65 or subunit A), that associates with a variety of regulatory subunits. Proteins that associate with the core dimer include three families of regulatory subunits B (the R2/B/PR55/B55, R3/B''/PR72/PR130/PR59 and R5/B'/B56 families), the 48 kDa variable regulatory subunit, viral proteins, and cell signaling molecules. Interacts with SGO1. Found in a complex with at least ARL2, PPP2CB; PPP2R1A, PPP2R2A, PPP2R5E and TBCD.

The protein resides in the cytoplasm. In terms of biological role, the B regulatory subunit might modulate substrate selectivity and catalytic activity, and might also direct the localization of the catalytic enzyme to a particular subcellular compartment. Interacts with cyclin G in vitro. The sequence is that of Serine/threonine-protein phosphatase 2A 56 kDa regulatory subunit epsilon isoform (Ppp2r5e) from Mus musculus (Mouse).